Consider the following 453-residue polypeptide: Ethanolamine ammonia-lyase large subunit (453 aa).

Substrate-binding positions include 160-162 (RLQ) and Asn-193. Pro-194 and Gln-246 together coordinate adenosylcob(III)alamin. Glu-287 provides a ligand contact to substrate. An adenosylcob(III)alamin-binding site is contributed by Ser-295. Asp-362 contributes to the substrate binding site. An adenosylcob(III)alamin-binding site is contributed by Met-401.

It belongs to the EutB family. In terms of assembly, the basic unit is a heterodimer which dimerizes to form tetramers. The heterotetramers trimerize; 6 large subunits form a core ring with 6 small subunits projecting outwards. Adenosylcob(III)alamin serves as cofactor.

The protein resides in the bacterial microcompartment. The enzyme catalyses ethanolamine = acetaldehyde + NH4(+). It functions in the pathway amine and polyamine degradation; ethanolamine degradation. Functionally, catalyzes the deamination of various vicinal amino-alcohols to oxo compounds. Allows this organism to utilize ethanolamine as the sole source of nitrogen and carbon in the presence of vitamin B12. This chain is Ethanolamine ammonia-lyase large subunit, found in Escherichia coli O157:H7.